A 470-amino-acid polypeptide reads, in one-letter code: Sperm-associated antigen 8 (470 aa).

Residues Met1 to Ser21 show a composition bias toward polar residues. 3 disordered regions span residues Met1–His70, Ser117–Pro178, and Leu302–Gln321. Low complexity predominate over residues Pro27–Ala48. Positions Ser51–Ser60 are enriched in polar residues. Low complexity-rich tracts occupy residues Leu122–Gly175 and Thr303–Gln316. Mn stretches follow at residues Ser312–His325 and Glu364–Ala378.

The protein belongs to the SPAG8 family. Microtubule inner protein component of sperm flagellar doublet microtubules. Interacts with FHL5 (via second LIM domain). Interacts with RANBP9. As to expression, expressed in testis (at protein level). Not detected in brain, heart, kidney, spleen, liver, lung, thymus and colon (at protein level).

It localises to the cytoplasm. The protein resides in the nucleus. It is found in the cytoplasmic vesicle. The protein localises to the secretory vesicle. Its subcellular location is the acrosome. It localises to the cytoskeleton. The protein resides in the microtubule organizing center. It is found in the spindle. The protein localises to the cilium axoneme. Its subcellular location is the flagellum axoneme. Microtubule inner protein (MIP) part of the dynein-decorated doublet microtubules (DMTs) in cilia axoneme, which is required for motile cilia beating. Plays a role in spermatogenesis by enhancing the binding of CREM isoform tau to its coactivator FHL5 and increasing the FHL5-regulated transcriptional activation of CREM isoform tau. Involved in the acrosome reaction and in binding of sperm to the zona pellucida. Plays a role in regulation of the cell cycle by controlling progression through the G2/M phase, possibly by delaying the activation of CDK1 which is required for entry into mitosis. May play a role in fertility and microtubule formation through interaction with RANBP9. This Mus musculus (Mouse) protein is Sperm-associated antigen 8.